A 470-amino-acid chain; its full sequence is Shutoff alkaline exonuclease (470 aa).

This sequence belongs to the herpesviridae alkaline nuclease family. Forms a complex with the DNA polymerase, the DNA polymerase processivity factor, and the major DNA binding protein.

The protein resides in the host nucleus. The protein localises to the host cytoplasm. Its function is as follows. Plays a role in processing non linear or branched viral DNA intermediates in order to promote the production of mature packaged unit-length linear progeny viral DNA molecules. Exhibits endonuclease and exonuclease activities and accepts both double-stranded and single-stranded DNA as substrate. Exonuclease digestion of DNA is in the 5'-&gt; 3' direction and the products are 5'-monophosphate nucleosides. Additionally, forms a recombinase with the major DNA-binding protein, which displays strand exchange activity. Also acts as a cytoplasmic RNA endonuclease that induces degradation of the majority of the cellular messenger RNAs during early lytic infection. The resulting inhibition of cellular protein synthesis serves to ensure maximal viral gene expression and evasion from host immune response. Internally cleaves host mRNAs which are then degraded by the cellular exonuclease XRN1. Bypasses therefore the regulatory steps of deadenylation and decapping normally required for XRN1 activation. The polypeptide is Shutoff alkaline exonuclease (Epstein-Barr virus (strain GD1) (HHV-4)).